The chain runs to 246 residues: ATP synthase subunit a, chloroplastic (246 aa).

The next 5 helical transmembrane spans lie at 35–55 (AQVLITSWIVIGLILGLTFLA), 94–114 (IPFIGTMFLFIFVSNWSGALI), 132–152 (DINTTVALALLTSVAYFYAGL), 198–218 (LVVAVLVSLVPLVVPIPMMFL), and 219–239 (GLFTSAIQALIFATLAAAYIG).

It belongs to the ATPase A chain family. F-type ATPases have 2 components, CF(1) - the catalytic core - and CF(0) - the membrane proton channel. CF(1) has five subunits: alpha(3), beta(3), gamma(1), delta(1), epsilon(1). CF(0) has four main subunits: a, b, b' and c.

It localises to the plastid. The protein resides in the chloroplast thylakoid membrane. Functionally, key component of the proton channel; it plays a direct role in the translocation of protons across the membrane. This Chara vulgaris (Common stonewort) protein is ATP synthase subunit a, chloroplastic.